We begin with the raw amino-acid sequence, 933 residues long: Isoleucine--tRNA ligase (933 aa).

A 'HIGH' region motif is present at residues Pro-57–His-67. L-isoleucyl-5'-AMP is bound at residue Glu-554. The short motif at Lys-595–Ser-599 is the 'KMSKS' region element. An ATP-binding site is contributed by Lys-598.

This sequence belongs to the class-I aminoacyl-tRNA synthetase family. IleS type 1 subfamily. As to quaternary structure, monomer.

It is found in the cytoplasm. The catalysed reaction is tRNA(Ile) + L-isoleucine + ATP = L-isoleucyl-tRNA(Ile) + AMP + diphosphate. Functionally, catalyzes the attachment of isoleucine to tRNA(Ile). As IleRS can inadvertently accommodate and process structurally similar amino acids such as valine, to avoid such errors it has two additional distinct tRNA(Ile)-dependent editing activities. One activity is designated as 'pretransfer' editing and involves the hydrolysis of activated Val-AMP. The other activity is designated 'posttransfer' editing and involves deacylation of mischarged Val-tRNA(Ile). This chain is Isoleucine--tRNA ligase, found in Streptococcus pyogenes serotype M28 (strain MGAS6180).